Here is a 184-residue protein sequence, read N- to C-terminus: Type-1 fimbrial protein, A chain (184 aa).

An N-terminal signal peptide occupies residues 1–22 (MKHKLMTSTIASLMFVAGAAVA). An intrachain disulfide couples C46 to C86.

It belongs to the fimbrial protein family.

The protein localises to the fimbrium. In terms of biological role, fimbriae (also called pili), polar filaments radiating from the surface of the bacterium to a length of 0.5-1.5 micrometers and numbering 100-300 per cell, enable bacteria to colonize the epithelium of specific host organs. This is Type-1 fimbrial protein, A chain (fimA) from Salmonella typhi.